We begin with the raw amino-acid sequence, 158 residues long: Transcription elongation factor GreA (158 aa).

The protein belongs to the GreA/GreB family.

Functionally, necessary for efficient RNA polymerase transcription elongation past template-encoded arresting sites. The arresting sites in DNA have the property of trapping a certain fraction of elongating RNA polymerases that pass through, resulting in locked ternary complexes. Cleavage of the nascent transcript by cleavage factors such as GreA or GreB allows the resumption of elongation from the new 3'terminus. GreA releases sequences of 2 to 3 nucleotides. This chain is Transcription elongation factor GreA, found in Allorhizobium ampelinum (strain ATCC BAA-846 / DSM 112012 / S4) (Agrobacterium vitis (strain S4)).